A 333-amino-acid polypeptide reads, in one-letter code: Fructose-1,6-bisphosphatase class 1 (333 aa).

Mg(2+) is bound by residues glutamate 90, aspartate 112, leucine 114, and aspartate 115. Substrate is bound by residues 115–118, asparagine 207, and lysine 273; that span reads DGSS. Glutamate 279 contacts Mg(2+).

This sequence belongs to the FBPase class 1 family. In terms of assembly, homotetramer. The cofactor is Mg(2+).

It localises to the cytoplasm. It catalyses the reaction beta-D-fructose 1,6-bisphosphate + H2O = beta-D-fructose 6-phosphate + phosphate. It participates in carbohydrate biosynthesis; gluconeogenesis. The sequence is that of Fructose-1,6-bisphosphatase class 1 from Azoarcus sp. (strain BH72).